A 412-amino-acid chain; its full sequence is DNA replication and repair protein RecF (412 aa).

30–37 (GKNGLGKT) is a binding site for ATP.

This sequence belongs to the RecF family.

The protein resides in the cytoplasm. Functionally, the RecF protein is involved in DNA metabolism; it is required for DNA replication and normal SOS inducibility. RecF binds preferentially to single-stranded, linear DNA. It also seems to bind ATP. The polypeptide is DNA replication and repair protein RecF (Bifidobacterium longum subsp. infantis (strain ATCC 15697 / DSM 20088 / JCM 1222 / NCTC 11817 / S12)).